A 263-amino-acid polypeptide reads, in one-letter code: Endonuclease 8 (263 aa).

Pro2 acts as the Schiff-base intermediate with DNA in catalysis. The active-site Proton donor is Glu3. The Proton donor; for beta-elimination activity role is filled by Lys53. Residues Gln70, Arg125, and Asn169 each contribute to the DNA site. The FPG-type zinc-finger motif lies at 229–263 (KVFHRDGEPCERCGGIIEKTTLSSRPFYWCPGCQH). Residue Arg253 is the Proton donor; for delta-elimination activity of the active site.

Belongs to the FPG family. Zn(2+) serves as cofactor.

It carries out the reaction 2'-deoxyribonucleotide-(2'-deoxyribose 5'-phosphate)-2'-deoxyribonucleotide-DNA = a 3'-end 2'-deoxyribonucleotide-(2,3-dehydro-2,3-deoxyribose 5'-phosphate)-DNA + a 5'-end 5'-phospho-2'-deoxyribonucleoside-DNA + H(+). Involved in base excision repair of DNA damaged by oxidation or by mutagenic agents. Acts as a DNA glycosylase that recognizes and removes damaged bases. Has a preference for oxidized pyrimidines, such as thymine glycol, 5,6-dihydrouracil and 5,6-dihydrothymine. Has AP (apurinic/apyrimidinic) lyase activity and introduces nicks in the DNA strand. Cleaves the DNA backbone by beta-delta elimination to generate a single-strand break at the site of the removed base with both 3'- and 5'-phosphates. The polypeptide is Endonuclease 8 (Escherichia coli (strain UTI89 / UPEC)).